The sequence spans 468 residues: Chromosomal replication initiator protein DnaA (468 aa).

The segment at 1-84 is domain I, interacts with DnaA modulators; that stretch reads MSSSLWLQCL…RFEVGSRPVS (84 aa). The segment at 80–106 is disordered; it reads SRPVSAPKPAPTRTPADVAAESSAPAQ. Residues 84–131 form a domain II region; it reads SAPKPAPTRTPADVAAESSAPAQLQARKPVHKTWDDDPQAIAAINHRS. The interval 132 to 348 is domain III, AAA+ region; the sequence is NMNPKHKFDN…GALNRVIANA (217 aa). ATP is bound by residues Gly176, Gly178, Lys179, and Thr180. Residues 349–468 are domain IV, binds dsDNA; the sequence is NFTGRPITID…YSNLIRTLSS (120 aa).

The protein belongs to the DnaA family. In terms of assembly, oligomerizes as a right-handed, spiral filament on DNA at oriC.

The protein resides in the cytoplasm. Plays an essential role in the initiation and regulation of chromosomal replication. ATP-DnaA binds to the origin of replication (oriC) to initiate formation of the DNA replication initiation complex once per cell cycle. Binds the DnaA box (a 9 base pair repeat at the origin) and separates the double-stranded (ds)DNA. Forms a right-handed helical filament on oriC DNA; dsDNA binds to the exterior of the filament while single-stranded (ss)DNA is stabiized in the filament's interior. The ATP-DnaA-oriC complex binds and stabilizes one strand of the AT-rich DNA unwinding element (DUE), permitting loading of DNA polymerase. After initiation quickly degrades to an ADP-DnaA complex that is not apt for DNA replication. Binds acidic phospholipids. This is Chromosomal replication initiator protein DnaA from Vibrio parahaemolyticus serotype O3:K6 (strain RIMD 2210633).